A 127-amino-acid chain; its full sequence is Large ribosomal subunit protein uL22c (127 aa).

This sequence belongs to the universal ribosomal protein uL22 family. As to quaternary structure, part of the 50S ribosomal subunit.

It localises to the plastid. The protein localises to the chloroplast. Its function is as follows. This protein binds specifically to 23S rRNA. The globular domain of the protein is located near the polypeptide exit tunnel on the outside of the subunit, while an extended beta-hairpin is found that lines the wall of the exit tunnel in the center of the 70S ribosome. The sequence is that of Large ribosomal subunit protein uL22c (rpl22) from Acorus calamus var. americanus (American sweet flag).